Consider the following 288-residue polypeptide: DegV domain-containing protein (288 aa).

The region spanning 3-282 (IAVMTDSTSY…SGGLGLGYVG (280 aa)) is the DegV domain. T62 and S95 together coordinate hexadecanoate.

In terms of biological role, may bind long-chain fatty acids, such as palmitate, and may play a role in lipid transport or fatty acid metabolism. In Staphylococcus aureus, this protein is DegV domain-containing protein.